The following is a 239-amino-acid chain: UPF0173 metal-dependent hydrolase rrnAC0300 (239 aa).

It belongs to the UPF0173 family.

In Haloarcula marismortui (strain ATCC 43049 / DSM 3752 / JCM 8966 / VKM B-1809) (Halobacterium marismortui), this protein is UPF0173 metal-dependent hydrolase rrnAC0300.